Reading from the N-terminus, the 3974-residue chain is Hybrid PKS-NRPS synthetase 1 (3974 aa).

The region spanning 5–442 (SQKIAIIGSA…GTNAHCLIES (438 aa)) is the Ketosynthase family 3 (KS3) domain. Catalysis depends on for beta-ketoacyl synthase activity residues Cys-179, His-316, and His-362. A malonyl-CoA:ACP transacylase (MAT) domain region spans residues 561 to 883 (IFTGQGAQWA…TGILERGLDD (323 aa)). Residues 954-1079 (HPLLGSRLSA…HDSELGIPES (126 aa)) are N-terminal hotdog fold. Positions 954 to 1251 (HPLLGSRLSA…QVESVKLVPV (298 aa)) are dehydratase (DH) domain. The PKS/mFAS DH domain maps to 954–1257 (HPLLGSRLSA…LVPVITPDAS (304 aa)). Residue His-986 is the Proton acceptor; for dehydratase activity of the active site. Positions 1107–1257 (TTPISSAKIY…LVPVITPDAS (151 aa)) are C-terminal hotdog fold. Asp-1165 acts as the Proton donor; for dehydratase activity in catalysis. Positions 1398–1529 (PWNTELRNAI…GYLLLVAKTG (132 aa)) are methyltransferase (MT) domain. The interval 2108-2282 (TYFLAGMTDS…ASIMDTGVVT (175 aa)) is ketoreductase (KR) domain. Residues 2492-2516 (AGRSASPGASCSDRSLSTRSDETRS) form a disordered region. Residues 2498 to 2509 (PGASCSDRSLST) are compositionally biased toward polar residues. Positions 2560-2994 (APLSPGQAQL…LERLRTSSDQ (435 aa)) are condensation (C) domain. The interval 3021-3423 (DAMAEKYFDQ…DGSLILLGRM (403 aa)) is adenylation (A) (KR) domain. One can recognise a Carrier domain in the interval 3537–3613 (SADQLVEAEV…EMAEKMASVR (77 aa)). At Ser-3573 the chain carries O-(pantetheine 4'-phosphoryl)serine. The interval 3657-3940 (VVLTGAADLL…KLEMGEWIAL (284 aa)) is reductase (RED) domain.

In the C-terminal section; belongs to the NRP synthetase family.

It functions in the pathway secondary metabolite biosynthesis. Its function is as follows. Hybrid PKS-NRPS synthetase; part of the hps1-dma1 gene cluster that probably mediates the biosynthesis a derivative of cyclopiazonic acid (CPA). The hybrid polyketide synthase-nonribosomal peptide synthetase (PKS-NRPS) nps1 might incorporates acetyl-CoA, malonyl-CoA, and tryptophan (Trp) and utilizes a C-terminal redox-incompetent reductase domain to make and release the tryptophan tetramic acid, cyclo-acetoacetyl-L-tryptophan (c-AATrp), as the first intermediate in the pathway. In addition, the cluster also includes the tryptophan dimethylallyltransferase dma1, the FAD-dependent oxidoreductase toxD, the cytochrome P450 monooxygenase cyp3.1 and the methyltransferase DOTSEDRAFT_139328; the latter 2 being not present in all CPA-producing fungi but involved in additional modifications that occur in biosynthesis the of a range of CPA and CPA-like products. Further studies are required to clarify whether the CPA-like hps1-dma1 cluster is functional or a non-functional relic reflecting evolution of D.septosporum. The polypeptide is Hybrid PKS-NRPS synthetase 1 (Dothistroma septosporum (strain NZE10 / CBS 128990) (Red band needle blight fungus)).